The sequence spans 224 residues: Transposase for insertion sequence-like element IS431mec (224 aa).

Residues 33–52 (EILRERGVNVHHSTVYRWVQ) constitute a DNA-binding region (H-T-H motif). The Integrase catalytic domain maps to 73–222 (WRIDETYIKI…SPCHEISIML (150 aa)).

In terms of biological role, involved in the transposition of the insertion sequence. This Staphylococcus aureus (strain NCTC 8325 / PS 47) protein is Transposase for insertion sequence-like element IS431mec (tnp).